The following is a 487-amino-acid chain: Serine/threonine-protein kinase 4 (487 aa).

Met-1 is subject to N-acetylmethionine. Thr-3 is subject to Phosphothreonine. Residues 30–281 (FDVLEKLGEG…ATQLLQHPFV (252 aa)) form the Protein kinase domain. ATP is bound by residues 36–44 (LGEGSYGSV) and Lys-59. Asp-149 serves as the catalytic Proton acceptor. The residue at position 183 (Thr-183) is a Phosphothreonine; by autocatalysis. Ser-265 is modified (phosphoserine). Residues 290–310 (LRDLINEAMDVKLKRQESQQR) are a coiled coil. The segment covering 303–312 (KRQESQQREV) has biased composition (basic and acidic residues). The segment at 303 to 332 (KRQESQQREVDQDDEENSEEDEMDSGTMVR) is disordered. The span at 313–326 (DQDDEENSEEDEMD) shows a compositional bias: acidic residues. Ser-320 bears the Phosphoserine mark. Phosphothreonine occurs at positions 340 and 367. A Phosphothreonine; by PKB/AKT1 modification is found at Thr-387. Ser-410 and Ser-414 each carry phosphoserine. Tyr-433 is subject to Phosphotyrosine. One can recognise an SARAH domain in the interval 433–480 (YEFLKSWTVEDLQKRLLALDPMMEQEIEEIRQKYQSKRQPILDAIEAK).

It belongs to the protein kinase superfamily. STE Ser/Thr protein kinase family. STE20 subfamily. In terms of assembly, homodimer; mediated via the coiled-coil region. Interacts with NORE1, which inhibits autoactivation. Interacts with and stabilizes SAV1. Interacts with RASSF1. Interacts with FOXO3. Interacts with RASSF2 (via SARAH domain). Interacts with AR, PKB/AKT1, TNNI3 and SIRT1. Interacts with DLG5 (via PDZ domain 3). Interacts with MARK3 and SCRIB in the presence of DLG5. Requires Mg(2+) as cofactor. Autophosphorylated on serine and threonine residues. Phosphorylation at Thr-387 by PKB/AKT1, leads to inhibition of its: kinase activity, nuclear translocation and autophosphorylation at Thr-183. It also diminishes its cleavage by caspases and its ability to phosphorylate FOXO3. In terms of processing, proteolytically cleaved by caspase-3 during apoptosis at Asp-326 and Asp-349 resulting in a 37 kDa or a 39 kDa subunit respectively. The 39 kDa subunit is further cleaved into the 37 kDa form. Proteolytic cleavage results in kinase activation and nuclear translocation of the truncated form (MST1/N). It is less likely that cleavage at Asp-349 is a prerequisite for activation as this site is not conserved in the murine ortholog.

It localises to the cytoplasm. The protein resides in the nucleus. The catalysed reaction is L-seryl-[protein] + ATP = O-phospho-L-seryl-[protein] + ADP + H(+). It carries out the reaction L-threonyl-[protein] + ATP = O-phospho-L-threonyl-[protein] + ADP + H(+). With respect to regulation, inhibited by the C-terminal non-catalytic region. Activated by caspase-cleavage. Full activation also requires homodimerization and autophosphorylation of Thr-183. Activated by RASSF1 which acts by preventing its dephosphorylation. Functionally, stress-activated, pro-apoptotic kinase which, following caspase-cleavage, enters the nucleus and induces chromatin condensation followed by internucleosomal DNA fragmentation. Key component of the Hippo signaling pathway which plays a pivotal role in organ size control and tumor suppression by restricting proliferation and promoting apoptosis. The core of this pathway is composed of a kinase cascade wherein STK3/MST2 and STK4/MST1, in complex with its regulatory protein SAV1, phosphorylates and activates LATS1/2 in complex with its regulatory protein MOB1, which in turn phosphorylates and inactivates YAP1 oncoprotein and WWTR1/TAZ. Phosphorylation of YAP1 by LATS2 inhibits its translocation into the nucleus to regulate cellular genes important for cell proliferation, cell death, and cell migration. STK3/MST2 and STK4/MST1 are required to repress proliferation of mature hepatocytes, to prevent activation of facultative adult liver stem cells (oval cells), and to inhibit tumor formation. Phosphorylates 'Ser-14' of histone H2B (H2BS14ph) during apoptosis. Phosphorylates FOXO3 upon oxidative stress, which results in its nuclear translocation and cell death initiation. Phosphorylates MOBKL1A, MOBKL1B and RASSF2. Phosphorylates TNNI3 (cardiac Tn-I) and alters its binding affinity to TNNC1 (cardiac Tn-C) and TNNT2 (cardiac Tn-T). Phosphorylates FOXO1 on 'Ser-212' and regulates its activation and stimulates transcription of PMAIP1 in a FOXO1-dependent manner. Phosphorylates SIRT1 and inhibits SIRT1-mediated p53/TP53 deacetylation, thereby promoting p53/TP53 dependent transcription and apoptosis upon DNA damage. Acts as an inhibitor of PKB/AKT1. Phosphorylates AR on 'Ser-650' and suppresses its activity by intersecting with PKB/AKT1 signaling and antagonizing formation of AR-chromatin complexes. The polypeptide is Serine/threonine-protein kinase 4 (STK4) (Colobus guereza (Mantled guereza)).